Here is a 361-residue protein sequence, read N- to C-terminus: 3-dehydroquinate synthase (361 aa).

The protein belongs to the archaeal-type DHQ synthase family.

The enzyme catalyses 2-amino-2,3,7-trideoxy-D-lyxo-hept-6-ulosonate + NAD(+) + H2O = 3-dehydroquinate + NH4(+) + NADH + H(+). In terms of biological role, catalyzes the oxidative deamination and cyclization of 2-amino-3,7-dideoxy-D-threo-hept-6-ulosonic acid (ADH) to yield 3-dehydroquinate (DHQ), which is fed into the canonical shikimic pathway of aromatic amino acid biosynthesis. The protein is 3-dehydroquinate synthase (aroB') of Methanocaldococcus jannaschii (strain ATCC 43067 / DSM 2661 / JAL-1 / JCM 10045 / NBRC 100440) (Methanococcus jannaschii).